The sequence spans 146 residues: Peptide methionine sulfoxide reductase MsrB (146 aa).

Residues L2–Y125 form the MsrB domain. The active-site Nucleophile is C114.

It belongs to the MsrB Met sulfoxide reductase family.

It catalyses the reaction L-methionyl-[protein] + [thioredoxin]-disulfide + H2O = L-methionyl-(R)-S-oxide-[protein] + [thioredoxin]-dithiol. The polypeptide is Peptide methionine sulfoxide reductase MsrB (Staphylococcus carnosus (strain TM300)).